A 189-amino-acid chain; its full sequence is uncharacterized protein (189 aa).

Positions 9 to 69 constitute an HTH tetR-type domain; that stretch reads ADTGGRILRA…SMLTSHIAAV (61 aa). The H-T-H motif DNA-binding region spans 32–51; it reads TLAEIARRAGVSRPTVYRRW.

This is an uncharacterized protein from Mycobacterium bovis (strain ATCC BAA-935 / AF2122/97).